A 320-amino-acid chain; its full sequence is Cytochrome f (320 aa).

An N-terminal signal peptide occupies residues 1–35 (MENRKTFSWLKEQMIRSISVSIMIYVITRTSISNA). Tyr36, Cys56, Cys59, and His60 together coordinate heme. The chain crosses the membrane as a helical span at residues 286-306 (VQGLLFFFASVILAQVFLVLK).

The protein belongs to the cytochrome f family. In terms of assembly, the 4 large subunits of the cytochrome b6-f complex are cytochrome b6, subunit IV (17 kDa polypeptide, petD), cytochrome f and the Rieske protein, while the 4 small subunits are PetG, PetL, PetM and PetN. The complex functions as a dimer. Heme serves as cofactor.

Its subcellular location is the plastid. The protein localises to the chloroplast thylakoid membrane. In terms of biological role, component of the cytochrome b6-f complex, which mediates electron transfer between photosystem II (PSII) and photosystem I (PSI), cyclic electron flow around PSI, and state transitions. In Saccharum hybrid (Sugarcane), this protein is Cytochrome f.